Here is a 416-residue protein sequence, read N- to C-terminus: Prostacyclin receptor (416 aa).

Residues 1–45 (MVASGGRPDGPPSITPESPLIVGGREWQGMAGSCWNITYVQDSVG) lie on the Extracellular side of the membrane. 2 disulfides stabilise this stretch: Cys-34-Cys-194 and Cys-121-Cys-199. Residue Asn-36 is glycosylated (N-linked (GlcNAc...) asparagine). The helical transmembrane segment at 46 to 67 (PATSTLMFVAGVVGNGLALGIL) threads the bilayer. Residues 68–80 (GARRRSHPSAFAV) lie on the Cytoplasmic side of the membrane. The helical transmembrane segment at 81-105 (LVTGLAVTDLLGTCFLSPAVFVAYA) threads the bilayer. Residues 106–123 (RNSSLLGLAHGGTMLCDT) are Extracellular-facing. Residues 124–144 (FAFAMTFFGLASTLILFAMAV) traverse the membrane as a helical segment. The Cytoplasmic portion of the chain corresponds to 145–163 (ERCLALSHPYLYAQLDGPR). A helical transmembrane segment spans residues 164-187 (CARLALPAIYAFCCLFCSLPLLGL). Over 188 to 215 (GEHQQYCPGSWCFIRMRSPQPGGCAFSL) the chain is Extracellular. A helical transmembrane segment spans residues 216-237 (AYASLMALLVTSIFFCNGSVTL). At 238-264 (SLCHMYRQQRRHHGSFVPTSRAREDEV) the chain is on the cytoplasmic side. Residues 265 to 289 (YHLILLALMTGIMAVCSLPLTIRGF) form a helical membrane-spanning segment. The Extracellular portion of the chain corresponds to 290–302 (TQAIAPDSREMGD). A helical membrane pass occupies residues 303–323 (LHAFRFNAFNPILDPWVFILF). Over 324-416 (RKAVFQRLKF…TEAVVACSLC (93 aa)) the chain is Cytoplasmic. Ser-366 carries the post-translational modification Phosphoserine. The residue at position 413 (Cys-413) is a Cysteine methyl ester. Cys-413 carries S-farnesyl cysteine lipidation. The propeptide at 414-416 (SLC) is removed in mature form.

This sequence belongs to the G-protein coupled receptor 1 family. In terms of assembly, interacts (non-isoprenylated C-terminus) with PDZK1. Isoprenylation does not influence ligand binding but is required for efficient coupling to the effectors adenylyl cyclase and phospholipase C.

The protein resides in the cell membrane. Functionally, receptor for prostacyclin (prostaglandin I2 or PGI2). The activity of this receptor is mediated by G(s) proteins which activate adenylate cyclase. The polypeptide is Prostacyclin receptor (Ptgir) (Rattus norvegicus (Rat)).